We begin with the raw amino-acid sequence, 1141 residues long: cGMP-inhibited 3',5'-cyclic phosphodiesterase 3A (1141 aa).

The segment at 1-42 (MAVPGDAARVRDKPVHSGVSQAPTAGRDCHHRADPASPRDSG) is disordered. The next 6 helical transmembrane spans lie at 61 to 81 (LSSA…VRLV), 130 to 150 (LQPS…GLYL), 160 to 180 (AVAL…GLGV), 185 to 205 (LLSL…TWLV), 210 to 230 (LGVL…ISLE), and 232 to 252 (FKVA…ILLA). Residue S312 is modified to Phosphoserine. Phosphoserine; by PKA and PKC occurs at positions 428 and 438. The span at 436–448 (RVSSTWTTTTSAT) shows a compositional bias: low complexity. The segment at 436–482 (RVSSTWTTTTSATGLPTLEPAPVRRDRSTSIKLQEAPSSSPDSWNNP) is disordered. Over residues 465–482 (SIKLQEAPSSSPDSWNNP) the composition is skewed to polar residues. Residues S492, S520, and S524 each carry the phosphoserine modification. A disordered region spans residues 590–640 (RPYSQGNPADEPLERSGVATRTPSRTDDTAQVTSDYETNNNSDSSDIVQNE). Polar residues predominate over residues 608-637 (ATRTPSRTDDTAQVTSDYETNNNSDSSDIV). Positions 669-1141 (KPILAPEPLV…EEIPTQKPDQ (473 aa)) are interaction with SLFN12. Positions 674-1093 (PEPLVMDNLD…KMWKKVIEEE (420 aa)) constitute a PDEase domain. H752 acts as the Proton donor in catalysis. H752 provides a ligand contact to AMP. Mn(2+)-binding residues include H756, H836, D837, and D950. The AMP site is built by D837, D950, and Q1001. D837 contributes to the Mg(2+) binding site. 2 disordered regions span residues 1023 to 1062 (PGKW…ESPK) and 1100 to 1141 (ENQS…KPDQ). A compositionally biased stretch (acidic residues) spans 1029–1056 (DSDESGDTDDPEEEEEEAPAPNEEETCE). S1033 is subject to Phosphoserine. Phosphothreonine is present on T1036. The segment covering 1100–1113 (ENQSLDQTPQSHSS) has biased composition (polar residues). K1120 is covalently cross-linked (Glycyl lysine isopeptide (Lys-Gly) (interchain with G-Cter in SUMO2)). A compositionally biased stretch (basic and acidic residues) spans 1125–1141 (EKGKPRGEEIPTQKPDQ).

It belongs to the cyclic nucleotide phosphodiesterase family. PDE3 subfamily. In terms of assembly, homodimer. Interacts with SLFN12; direct low affinity interaction which is stimulated by binding of 17beta-estradiol/E2 to PDE3A and that positively regulates the ribonuclease activity of SLFN12. Requires Mn(2+) as cofactor. Mg(2+) serves as cofactor.

The protein localises to the membrane. Its subcellular location is the cytoplasm. It localises to the cytosol. It carries out the reaction a nucleoside 3',5'-cyclic phosphate + H2O = a nucleoside 5'-phosphate + H(+). The catalysed reaction is 3',5'-cyclic AMP + H2O = AMP + H(+). It catalyses the reaction 3',5'-cyclic GMP + H2O = GMP + H(+). The enzyme catalyses 3',5'-cyclic UMP + H2O = UMP + H(+). Inhibited by cGMP. Inhibited by 17beta-estradiol. Inhibited by milrinone. Functionally, cyclic nucleotide phosphodiesterase with specificity for the second messengers cAMP and cGMP, which are key regulators of many important physiological processes. Also has activity toward cUMP. Independently of its catalytic activity it is part of an E2/17beta-estradiol-induced pro-apoptotic signaling pathway. E2 stabilizes the PDE3A/SLFN12 complex in the cytosol, promoting the dephosphorylation of SLFN12 and activating its pro-apoptotic ribosomal RNA/rRNA ribonuclease activity. This apoptotic pathway might be relevant in tissues with high concentration of E2 and be for instance involved in placenta remodeling. This chain is cGMP-inhibited 3',5'-cyclic phosphodiesterase 3A, found in Homo sapiens (Human).